A 461-amino-acid polypeptide reads, in one-letter code: Proton extrusion protein PxcA (461 aa).

4 helical membrane-spanning segments follow: residues 244–264 (FMLLLVILPLLTQQISKALIV), 339–359 (LKNILSDALGFTVFLALVFTG), 386–406 (IILFTDVFVGFHSPHGWEVLV), and 421–441 (FINMFIATFPVMLDTVFKYWI).

It belongs to the CemA family.

The protein localises to the cell inner membrane. Required for H(+) efflux immediately after light irradiation to form a rapid H(+) concentration gradient across the thylakoid membranes. Together with PxcL, contributes to transient H(+) uptake following dark to light transition. This Thermosynechococcus vestitus (strain NIES-2133 / IAM M-273 / BP-1) protein is Proton extrusion protein PxcA.